The primary structure comprises 369 residues: Anhydro-N-acetylmuramic acid kinase (369 aa).

12–19 (GTSLDGVD) lines the ATP pocket.

The protein belongs to the anhydro-N-acetylmuramic acid kinase family.

It carries out the reaction 1,6-anhydro-N-acetyl-beta-muramate + ATP + H2O = N-acetyl-D-muramate 6-phosphate + ADP + H(+). It participates in amino-sugar metabolism; 1,6-anhydro-N-acetylmuramate degradation. Its pathway is cell wall biogenesis; peptidoglycan recycling. In terms of biological role, catalyzes the specific phosphorylation of 1,6-anhydro-N-acetylmuramic acid (anhMurNAc) with the simultaneous cleavage of the 1,6-anhydro ring, generating MurNAc-6-P. Is required for the utilization of anhMurNAc either imported from the medium or derived from its own cell wall murein, and thus plays a role in cell wall recycling. This Escherichia coli O81 (strain ED1a) protein is Anhydro-N-acetylmuramic acid kinase.